The primary structure comprises 616 residues: Probable beta-hexosaminidase ARB_01353 (616 aa).

The first 20 residues, Met-1–Ala-20, serve as a signal peptide directing secretion. The interval Lys-96 to Gly-117 is disordered. Asn-333 is a glycosylation site (N-linked (GlcNAc...) asparagine). Residue Glu-361 is the Proton donor of the active site.

This sequence belongs to the glycosyl hydrolase 20 family.

The protein resides in the secreted. The catalysed reaction is Hydrolysis of terminal non-reducing N-acetyl-D-hexosamine residues in N-acetyl-beta-D-hexosaminides.. Its function is as follows. Beta-hexosaminidase that shows a broad substrate specificity. The sequence is that of Probable beta-hexosaminidase ARB_01353 from Arthroderma benhamiae (strain ATCC MYA-4681 / CBS 112371) (Trichophyton mentagrophytes).